The chain runs to 672 residues: Protein OS-9 (672 aa).

The first 26 residues, 1–26 (MAAEVLLSSLLGLLFLGLLLPARLTG), serve as a signal peptide directing secretion. Residues 108–230 (APCLLKTKDW…TIRTSRLCPH (123 aa)) enclose the MRH domain. A disulfide bridge links C110 with C123. 3 residues coordinate a mannooligosaccharide derivative: W117, W118, and Q130. The N-linked (GlcNAc...) asparagine glycan is linked to N177. Cystine bridges form between C181–C216 and C196–C228. A mannooligosaccharide derivative contacts are provided by D182, R188, E212, and Y218. 4 disordered regions span residues 261 to 355 (RQAE…NVQV), 372 to 452 (KAAE…LLPS), 511 to 548 (ENQSPELVQKYKKRRVVPQKPPPSPHPTEEEPEHRVRV), and 637 to 672 (EANKERQRQSELESNYRRVWGSPGGEDTGDLDEFDF). Basic and acidic residues-rich tracts occupy residues 263-281 (AESKQHEEKTTEEVQDTDR), 294-310 (PKKEDVSPAKEEKESEL), 320-338 (AAAREEAQAGEQDLNHEAA), 372-386 (KAAEKGKPSVRREQP), and 394-409 (PQREAEGTKAKGKDGE). Acidic residues predominate over residues 414–435 (MEEEDGDDEEEEEEEEEDEEEQ). Positions 637–652 (EANKERQRQSELESNY) are enriched in basic and acidic residues. Residues 663 to 672 (DTGDLDEFDF) show a composition bias toward acidic residues.

Belongs to the OS-9 family. Component of the HRD1 complex, which comprises at least SYNV1/HRD1, DERL1/2, FAM8A1, HERPUD1/HERP, OS9, SEL1L and UBE2J1. FAM8A1 is stabilized by interaction with SYNV1, which prevents its proteasomal degradation. OS9 and UBE2J1 recruitment to the complex may be mediated by SEL1L. Through this complex, may interact with ERLEC1 and HSPA5. Interacts (via C-terminus) with CPNE6 (via second C2 domain); this interaction occurs in a calcium-dependent manner in vitro. Interacts with CREB3. In terms of processing, N-glycosylated. Post-translationally, intramolecular disulfide bonds.

It localises to the endoplasmic reticulum lumen. In terms of biological role, lectin component of the HRD1 complex, which functions in endoplasmic reticulum (ER) quality control and ER-associated degradation (ERAD). Specifically recognizes and binds improperly folded glycoproteins as well as hyperglycosylated proteins, retain them in the ER, and transfers them to the ubiquitination machinery and promote their degradation. Possible targets include TRPV4 as well as hyperglycosylated HSP90B1. This Mus musculus (Mouse) protein is Protein OS-9 (Os9).